Reading from the N-terminus, the 213-residue chain is Uridine kinase (213 aa).

Position 14–21 (14–21 (GASASGKS)) interacts with ATP.

It belongs to the uridine kinase family.

The protein localises to the cytoplasm. The enzyme catalyses uridine + ATP = UMP + ADP + H(+). The catalysed reaction is cytidine + ATP = CMP + ADP + H(+). It functions in the pathway pyrimidine metabolism; CTP biosynthesis via salvage pathway; CTP from cytidine: step 1/3. Its pathway is pyrimidine metabolism; UMP biosynthesis via salvage pathway; UMP from uridine: step 1/1. This Vibrio vulnificus (strain CMCP6) protein is Uridine kinase.